Reading from the N-terminus, the 553-residue chain is 5'-nucleotidase domain-containing protein 2 (553 aa).

The interval 26–51 (SSSPSCPGCGPPGPGAHCPSTPRSAP) is disordered. Aspartate 106 serves as the catalytic Nucleophile. Positions 106, 108, and 391 each coordinate Mg(2+). Aspartate 108 (proton donor) is an active-site residue.

It belongs to the 5'(3')-deoxyribonucleotidase family. Interacts with tyrosine 3-monooxygenase TH; the interaction results in reduced phosphorylation and decreased catalytic activity of TH. Expressed in eye iridocorneal angle.

It localises to the cytoplasm. Its function is as follows. Promotes dephosphorylation of tyrosine 3-monooxygenase TH which decreases TH catalytic activity and leads to reduced synthesis of catecholamines including dopamine, noradrenaline and adrenaline. The exact mechanism of activity is unknown but may act as a phosphatase or promote the activity of phosphatases or may inhibit phosphorylation by acting as a barrier to interfere with protein kinase access. The polypeptide is 5'-nucleotidase domain-containing protein 2 (Nt5dc2) (Rattus norvegicus (Rat)).